A 739-amino-acid chain; its full sequence is uncharacterized protein (739 aa).

Transmembrane regions (helical) follow at residues 53 to 73, 90 to 110, 114 to 134, 178 to 198, 421 to 441, 457 to 477, 491 to 511, and 532 to 552; these read LALG…ALTV, WHLF…AAIP, LMFI…GTFM, TYIL…QLGL, LIWI…VCIV, AFLR…LALM, GLAM…LPAV, and IVYF…SWMY.

The protein belongs to the aromatic acid exporter ArAE (TC 2.A.85) family.

The protein resides in the cell membrane. This is an uncharacterized protein from Gluconobacter oxydans (strain 621H) (Gluconobacter suboxydans).